The sequence spans 98 residues: NADH-ubiquinone oxidoreductase chain 4L (98 aa).

3 helical membrane-spanning segments follow: residues 1–21 (MSMVYVNISLAFTLSLMGLLM), 29–49 (SLLCLEGMMLSLFVMMSITIM), and 61–81 (IILLVFAACEAALGLSLLVMI).

Belongs to the complex I subunit 4L family. Core subunit of respiratory chain NADH dehydrogenase (Complex I) which is composed of 45 different subunits.

Its subcellular location is the mitochondrion inner membrane. It catalyses the reaction a ubiquinone + NADH + 5 H(+)(in) = a ubiquinol + NAD(+) + 4 H(+)(out). Functionally, core subunit of the mitochondrial membrane respiratory chain NADH dehydrogenase (Complex I) which catalyzes electron transfer from NADH through the respiratory chain, using ubiquinone as an electron acceptor. Part of the enzyme membrane arm which is embedded in the lipid bilayer and involved in proton translocation. The sequence is that of NADH-ubiquinone oxidoreductase chain 4L (MT-ND4L) from Procyon lotor (Raccoon).